The primary structure comprises 304 residues: 33 kDa chaperonin (304 aa).

Intrachain disulfides connect Cys-236/Cys-238 and Cys-269/Cys-272.

It belongs to the HSP33 family. Post-translationally, under oxidizing conditions two disulfide bonds are formed involving the reactive cysteines. Under reducing conditions zinc is bound to the reactive cysteines and the protein is inactive.

It is found in the cytoplasm. In terms of biological role, redox regulated molecular chaperone. Protects both thermally unfolding and oxidatively damaged proteins from irreversible aggregation. Plays an important role in the bacterial defense system toward oxidative stress. This Pelobacter propionicus (strain DSM 2379 / NBRC 103807 / OttBd1) protein is 33 kDa chaperonin.